Consider the following 1297-residue polypeptide: Protein ENHANCED DOWNY MILDEW 2 (1297 aa).

The PHD-type 1; degenerate zinc-finger motif lies at 222-281; that stretch reads ESVCAICDNGGEILCCEGSCLRSFHATKKDGEDSLCDSLGFNKMQVEAIQKYFCPNCEHK. Residues Cys237, Cys241, Cys275, Cys278, Cys285, Cys288, Cys306, Cys311, His316, Cys319, Cys346, and His349 each contribute to the Zn(2+) site. The PHD-type 2; atypical zinc finger occupies 282 to 352; it reads IHQCFICKNL…EYTCPLHKCS (71 aa). The segment at 351-417 adopts a PHD-type 3; degenerate zinc-finger fold; sequence CSVCENGEVK…RVLIYCQEHE (67 aa). The Nuclear localization signal 1 motif lies at 445–452; that stretch reads QRRILESH. Disordered stretches follow at residues 471–547 and 562–598; these read CGKA…ARDA and TQEP…IPTL. Low complexity predominate over residues 475-487; it reads SKNSFRSSFPSSK. A Nuclear localization signal 2 motif is present at residues 492–499; sequence TKKHGLVS. Basic and acidic residues predominate over residues 526–547; the sequence is KMMEDSREAGKNKLGVKEARDA. Short sequence motifs (nuclear localization signal) lie at residues 610–617 and 979–986; these read MKKATEEI and LKKEGKTK. Basic and acidic residues-rich tracts occupy residues 969–990 and 1096–1109; these read QSDH…DYSG and EVSR…RTSR. 3 disordered regions span residues 969 to 1017, 1085 to 1109, and 1260 to 1297; these read QSDH…GELS, HGCK…RTSR, and FPLP…WIND.

Interacts with WNK8 in nucleus; this interaction is involved in developmental processes regulation but not in RPP7-dependent disease resistance. Interacts with EML1 and EML2 in nucleus. Component of the ASI1-AIPP1-EDM2 (AAE) RNA regulatory complex composed of at least AIPP1/EDM3, ASI1 and EDM2 and may contain CPL2, AIPP2 and AIPP3/BDT1. Binds directly to AIPP1/EDM3. Co-associates with AIPP1/EDM3 to histone H3 lysine 9 dimethylation (H3K9me2)-marked chromatin and transcripts at a critical proximal polyadenylation site of RPP7 to hamper proximal transcript polyadeylation/termination. In terms of processing, phosphorylated by WNK8.

The protein resides in the nucleus. Functionally, cellular antisilencing factor and regulator of genome DNA methylation patterns involved in the regulation of chromatin states. Together with SUVH4, monitors repressive epigenetic marks H3K27me1, H3K9me2, and prevents DNA-methylation at CHG sites, affecting especially the expression of transposons and developmentally important genes. Collaboratively with ASI1 and AIPP1/EDM3, the AAE complex regulates alternative RNA processing (e.g. alternative splicing) and epigenetic silencing (e.g. H3K9me2) of intronic heterochromatin-containing genes as well as genic heterochromatin-containing genes by promoting distal 3' polyadenylation. Epigenetic reader that binds DNA and contributes to transcriptional transposable element (TE) silencing by modulating levels of the repressive post-translational histone modifications (PHM) H3K9me2. In cv. Columbia, required for RPP7-dependent disease resistance against the Hyaloperonospora arabidopsidis isolate Hiks1, by promoting levels of RPP7 via alternative polyadenylation (APA), resulting from cooption of epigenetic information at the TE insertion locus COPIA-R7. Exhibits a global role in NLR (nucleotide-binding, leucine-rich repeat) defense genes epigenetic (e.g. H3K9me2 hallmarks) expression control; promotes the accumulation of RPP7, RPP4 and some other proteins, but mediates the repression of several other NLR products, probably to compensate for fitness penalties caused by defense mechanisms. Regulates development processes such as the formation of leaf pavement cells, leaf expansion, fertility and flowering. Prevents FLC accumulation to control flowering. Modulates stomatal development by regulating the methylation-mediated silencing of ERECTA receptor genes (e.g. ER, ERL1 and ERL2) and preventing cell divisions. In Arabidopsis thaliana (Mouse-ear cress), this protein is Protein ENHANCED DOWNY MILDEW 2.